A 443-amino-acid polypeptide reads, in one-letter code: Histone deacetylase 10, chloroplastic (443 aa).

A chloroplast-targeting transit peptide spans 1 to 65; the sequence is MEQLWVPSLP…PSHNGTSISD (65 aa). A histone deacetylase region spans residues 82-412; it reads DAHILYCTSP…FRAFLGEPSL (331 aa). The Proton donor/acceptor role is filled by histidine 222. Residues aspartate 259, histidine 261, and aspartate 346 each contribute to the Zn(2+) site.

Belongs to the histone deacetylase family. Zn(2+) serves as cofactor. As to expression, expressed in leaves. Expressed in coleoptiles, leaves, flag leaves and flowers. Expressed at low levels in roots.

It is found in the plastid. It localises to the chloroplast. The protein resides in the mitochondrion. The enzyme catalyses N-acetylserotonin + H2O = serotonin + acetate. It carries out the reaction N-acetyltyramine + H2O = tyramine + acetate. It catalyses the reaction N-acetyltryptamine + H2O = tryptamine + acetate. The catalysed reaction is melatonin + H2O = 5-methoxytryptamine + acetate. With respect to regulation, the activity of this enzyme is not inhibited by butyrate, a well-known histone deacetylase inhibitor. In terms of biological role, involved in the regulation of melatonin biosynthesis by catalyzing the deacetylation of N-acetylserotonin to produce serotonin. N-acetylserotonin is methylated by acetylserotonin O-methyltransferase (ASMT) to produce melatonin (N-acetyl-5-methoxytryptamine). Deacetylates melatonin to produce 5-methoxytryptamine. In vitro, deacetylates N-acetyltyramine and N-acetyltryptamine to produce tyramine and tryptamine, respectively. This chain is Histone deacetylase 10, chloroplastic, found in Oryza sativa subsp. japonica (Rice).